A 198-amino-acid polypeptide reads, in one-letter code: Guanylyl cyclase-activating protein 2 (198 aa).

The N-myristoyl glycine moiety is linked to residue Gly-2. EF-hand domains lie at 16–51, 52–87, 88–123, and 139–174; these read DVAE…QDNH, EAAE…VLRG, KLEH…IYKL, and TPEE…DKWV. Residues Asp-65, Asn-67, Asp-69, Thr-71, Glu-76, Asp-101, Asp-103, Asn-105, Cys-107, Glu-112, Asp-152, Asn-154, Asp-156, Gln-158, and Glu-163 each contribute to the Ca(2+) site.

As to quaternary structure, undergoes dimerization at low calcium ions concentration, while the presence of calcium ions inhibits its dimerization. Dimerization correlates with its ability to activate GC. As to expression, retina and pineal gland.

Its function is as follows. Stimulates synthesis of cGMP in photoreceptors. Thought to mediate Ca(2+)-sensitive regulation of retinal guanylyl cyclase (GC), a key event in recovery of the dark state of rod photoreceptors following light exposure. The sequence is that of Guanylyl cyclase-activating protein 2 (GUCA1B) from Gallus gallus (Chicken).